The chain runs to 315 residues: tRNA dimethylallyltransferase (315 aa).

10 to 17 (GPTASGKS) provides a ligand contact to ATP. 12–17 (TASGKS) is a binding site for substrate. The segment at 35–38 (DSMQ) is interaction with substrate tRNA.

This sequence belongs to the IPP transferase family. As to quaternary structure, monomer. Mg(2+) is required as a cofactor.

It carries out the reaction adenosine(37) in tRNA + dimethylallyl diphosphate = N(6)-dimethylallyladenosine(37) in tRNA + diphosphate. Catalyzes the transfer of a dimethylallyl group onto the adenine at position 37 in tRNAs that read codons beginning with uridine, leading to the formation of N6-(dimethylallyl)adenosine (i(6)A). The polypeptide is tRNA dimethylallyltransferase (Thermoanaerobacter pseudethanolicus (strain ATCC 33223 / 39E) (Clostridium thermohydrosulfuricum)).